The chain runs to 251 residues: PF03932 family protein CutC (251 aa).

It belongs to the CutC family.

The protein resides in the cytoplasm. This Agrobacterium fabrum (strain C58 / ATCC 33970) (Agrobacterium tumefaciens (strain C58)) protein is PF03932 family protein CutC.